The primary structure comprises 431 residues: Adenylosuccinate lyase (431 aa).

Residues 4–5 (RY), 67–69 (RHD), and 93–94 (TS) each bind N(6)-(1,2-dicarboxyethyl)-AMP. Histidine 141 acts as the Proton donor/acceptor in catalysis. Glutamine 212 contributes to the N(6)-(1,2-dicarboxyethyl)-AMP binding site. Catalysis depends on serine 262, which acts as the Proton donor/acceptor. Residues serine 263, 268 to 270 (KRN), asparagine 276, and 307 to 311 (SAERI) contribute to the N(6)-(1,2-dicarboxyethyl)-AMP site.

Belongs to the lyase 1 family. Adenylosuccinate lyase subfamily. Homodimer and homotetramer. Residues from neighboring subunits contribute catalytic and substrate-binding residues to each active site.

The enzyme catalyses N(6)-(1,2-dicarboxyethyl)-AMP = fumarate + AMP. The catalysed reaction is (2S)-2-[5-amino-1-(5-phospho-beta-D-ribosyl)imidazole-4-carboxamido]succinate = 5-amino-1-(5-phospho-beta-D-ribosyl)imidazole-4-carboxamide + fumarate. It functions in the pathway purine metabolism; AMP biosynthesis via de novo pathway; AMP from IMP: step 2/2. The protein operates within purine metabolism; IMP biosynthesis via de novo pathway; 5-amino-1-(5-phospho-D-ribosyl)imidazole-4-carboxamide from 5-amino-1-(5-phospho-D-ribosyl)imidazole-4-carboxylate: step 2/2. Catalyzes two reactions in de novo purine nucleotide biosynthesis. Catalyzes the breakdown of 5-aminoimidazole- (N-succinylocarboxamide) ribotide (SAICAR or 2-[5-amino-1-(5-phospho-beta-D-ribosyl)imidazole-4-carboxamido]succinate) to 5-aminoimidazole-4-carboxamide ribotide (AICAR or 5-amino-1-(5-phospho-beta-D-ribosyl)imidazole-4-carboxamide) and fumarate, and of adenylosuccinate (ADS or N(6)-(1,2-dicarboxyethyl)-AMP) to adenosine monophosphate (AMP) and fumarate. The protein is Adenylosuccinate lyase (purB) of Staphylococcus saprophyticus subsp. saprophyticus (strain ATCC 15305 / DSM 20229 / NCIMB 8711 / NCTC 7292 / S-41).